A 512-amino-acid chain; its full sequence is Histidine ammonia-lyase (512 aa).

The 5-imidazolinone (Ala-Gly) cross-link spans 145 to 147 (ASG). A 2,3-didehydroalanine (Ser) modification is found at serine 146.

It belongs to the PAL/histidase family. Contains an active site 4-methylidene-imidazol-5-one (MIO), which is formed autocatalytically by cyclization and dehydration of residues Ala-Ser-Gly.

It localises to the cytoplasm. It catalyses the reaction L-histidine = trans-urocanate + NH4(+). It participates in amino-acid degradation; L-histidine degradation into L-glutamate; N-formimidoyl-L-glutamate from L-histidine: step 1/3. This Pseudomonas fluorescens (strain SBW25) protein is Histidine ammonia-lyase.